The primary structure comprises 137 residues: Putative protein YjhV (137 aa).

Positions 1–16 (MVGYHQTNQKTDTGKT) are enriched in polar residues. The segment at 1 to 20 (MVGYHQTNQKTDTGKTLTRR) is disordered.

The sequence is that of Putative protein YjhV (yjhV) from Escherichia coli (strain K12).